A 227-amino-acid polypeptide reads, in one-letter code: Probable cell wall protein PGA42 (227 aa).

The N-terminal stretch at 1–16 is a signal peptide; sequence MKFIILLFALIHITVA. A glycan (N-linked (GlcNAc...) asparagine) is linked at Asn-192. The GPI-anchor amidated serine moiety is linked to residue Ser-200. The propeptide at 201–227 is removed in mature form; that stretch reads GSQIFVLCVISVVGFIFFFLFFLSLFV.

Belongs to the IHD1 family. The GPI-anchor is attached to the protein in the endoplasmic reticulum and serves to target the protein to the cell surface. There, the glucosamine-inositol phospholipid moiety is cleaved off and the GPI-modified mannoprotein is covalently attached via its lipidless GPI glycan remnant to the 1,6-beta-glucan of the outer cell wall layer.

The protein localises to the secreted. The protein resides in the cell wall. It localises to the membrane. In terms of biological role, probable GPI-anchored cell wall protein that may be involved in cell wall organization, hyphal growth, as well as in virulence. In Candida albicans (strain SC5314 / ATCC MYA-2876) (Yeast), this protein is Probable cell wall protein PGA42 (PGA42).